Here is a 1004-residue protein sequence, read N- to C-terminus: Receptor-type tyrosine-protein phosphatase N2 (1004 aa).

The N-terminal stretch at 1–27 (MGLPLPLLLLLLLPPPLPRALPAPASA) is a signal peptide. Residues 1-409 (MGLPLPLLLL…PEAPLLEKSS (409 aa)) are involved in localization to secretory granules; interaction with CPE. Topologically, residues 28–603 (RGRQLPGRLG…HPEEQEDSTK (576 aa)) are extracellular. Arg259 carries the omega-N-methylarginine modification. Disordered stretches follow at residues 274–294 (APALSQRWPLPPGDSKDSLSM), 333–360 (QSDPVEGSQESHGRGAEGQLREQADAPE), and 393–459 (DHGS…WRLE). At Ser340 the chain carries Phosphoserine. Composition is skewed to basic and acidic residues over residues 341 to 356 (QESHGRGAEGQLREQA) and 407 to 418 (KSSRAEMKKSEQ). The span at 419 to 430 (PEEVLSSEEETA) shows a compositional bias: acidic residues. 2 positions are modified to phosphoserine: Ser424 and Ser425. The span at 431-450 (GVEHVKSRTYSKDLLERKPN) shows a compositional bias: basic and acidic residues. Asn553 is a glycosylation site (N-linked (GlcNAc...) asparagine). The helical transmembrane segment at 604-624 (FIVLTFLSIACILAVLLASSL) threads the bilayer. The Cytoplasmic portion of the chain corresponds to 625 to 1004 (AYCLRHNSHY…VNAILKALPQ (380 aa)). Positions 655–664 (YQELCRQRMA) match the Tyrosine-based internalization motif motif. A disordered region spans residues 665 to 710 (VRPQDHSEGPHTSRINSVSSQLSDGPMPSPSARSSTSSWSEEPAQS). Positions 677-687 (SRINSVSSQLS) are enriched in polar residues. Ser681 bears the Phosphoserine; by PKA mark. At Ser687 the chain carries Phosphoserine. Residues 694–710 (PSARSSTSSWSEEPAQS) are compositionally biased toward low complexity. Thr700 bears the Phosphothreonine; by PKA mark. A Tyrosine-protein phosphatase domain is found at 734–994 (LEKEWEALCA…EFALTAVAEE (261 aa)). Substrate is bound by residues Asp902 and 934 to 940 (CSDGAGR). Residue Cys934 is the Phosphocysteine intermediate of the active site. Lys959 bears the N6-acetyllysine mark. Substrate is bound at residue Gln979. The Leucine-based sorting signal motif lies at 993–999 (EEVNAIL).

Belongs to the protein-tyrosine phosphatase family. Receptor class 8 subfamily. In terms of assembly, self-associates. Interacts (via cytoplasmic domain) with PTPRN (via cytoplasmic domain). Interacts (precursor form) with CPE. Interacts with HAP1. Interacts with AP2A1 or AP2A2 and AP1G1; indicative for an association with adaptor protein complex 2 (AP-2) and adaptor protein complex 1 (AP-1). Interacts with AP2M1; indicative for an association with adaptor protein complex 2 (AP-2). Interacts with MYO5A. Subject to proteolytic cleavage at multiple sites.

It is found in the cytoplasmic vesicle. The protein resides in the secretory vesicle membrane. The protein localises to the secretory vesicle. Its subcellular location is the synaptic vesicle membrane. The enzyme catalyses O-phospho-L-tyrosyl-[protein] + H2O = L-tyrosyl-[protein] + phosphate. Its function is as follows. Plays a role in vesicle-mediated secretory processes. Required for normal accumulation of secretory vesicles in hippocampus, pituitary and pancreatic islets. Required for the accumulation of normal levels of insulin-containing vesicles and preventing their degradation. Plays a role in insulin secretion in response to glucose stimuli. Required for normal accumulation of the neurotransmitters norepinephrine, dopamine and serotonin in the brain. In females, but not in males, required for normal accumulation and secretion of pituitary hormones, such as luteinizing hormone (LH) and follicle-stimulating hormone (FSH). Required to maintain normal levels of renin expression and renin release. May regulate catalytic active protein-tyrosine phosphatases such as PTPRA through dimerization. Has phosphatidylinositol phosphatase activity; the PIPase activity is involved in its ability to regulate insulin secretion. Can dephosphorylate phosphatidylinositol 4,5-biphosphate, phosphatidylinositol 5-phosphate and phosphatidylinositol 3-phosphate. Regulates PI(4,5)P2 level in the plasma membrane and localization of cofilin at the plasma membrane and thus is indirectly involved in regulation of actin dynamics related to cell migration and metastasis; upon hydrolysis of PI(4,5)P2 cofilin is released from the plasma membrane and acts in the cytoplasm in severing F-actin filaments. The protein is Receptor-type tyrosine-protein phosphatase N2 (Ptprn2) of Rattus norvegicus (Rat).